A 147-amino-acid chain; its full sequence is Ribonuclease H (147 aa).

In terms of domain architecture, RNase H type-1 spans T3–E145. Mg(2+) contacts are provided by D12, E50, D72, and D137.

The protein belongs to the RNase H family. Monomer. Mg(2+) serves as cofactor.

Its subcellular location is the cytoplasm. The enzyme catalyses Endonucleolytic cleavage to 5'-phosphomonoester.. Its function is as follows. Endonuclease that specifically degrades the RNA of RNA-DNA hybrids. The sequence is that of Ribonuclease H from Chromobacterium violaceum (strain ATCC 12472 / DSM 30191 / JCM 1249 / CCUG 213 / NBRC 12614 / NCIMB 9131 / NCTC 9757 / MK).